The sequence spans 748 residues: NAD(P)H-quinone oxidoreductase subunit 5, chloroplastic (748 aa).

A run of 16 helical transmembrane segments spans residues 9–29, 40–60, 89–109, 121–140, 147–167, 185–205, 224–244, 258–278, 280–300, 327–347, 354–374, 396–416, 425–445, 551–571, 605–625, and 726–746; these read WIIPFLPLPVPMLIGVGLLLV, WAFPSVLLLSIVMIFSADLSI, IDPLTSIMSILITTVGIMVLV, YLRFFAYMSFSNTSMLGLVT, IYIFWELVGMCSYLLIGFWFT, GDFGLLLGILGLYWITGSFEF, LFVTLCASLLFVGAVAKSAQF, TPISALIHAATMVAAGIFLVA, LFPLFTVIPYIMNLISLIGII, LGYTMLALGMGSYRAALFHLI, ALLFLGSGSIIHSMETVVGYS, TAFLLGTLSLCGIPPLACFWS, WLYSPIFAIIACSTAGLTAFY, LLPLLVLVLFTLFVGFIGIPF, FITNAIFSVSIAYFGIFIASL, and YLFLYLSYVLIFLLISYFLFL.

The protein belongs to the complex I subunit 5 family. NDH is composed of at least 16 different subunits, 5 of which are encoded in the nucleus.

It localises to the plastid. The protein resides in the chloroplast thylakoid membrane. The catalysed reaction is a plastoquinone + NADH + (n+1) H(+)(in) = a plastoquinol + NAD(+) + n H(+)(out). The enzyme catalyses a plastoquinone + NADPH + (n+1) H(+)(in) = a plastoquinol + NADP(+) + n H(+)(out). Its function is as follows. NDH shuttles electrons from NAD(P)H:plastoquinone, via FMN and iron-sulfur (Fe-S) centers, to quinones in the photosynthetic chain and possibly in a chloroplast respiratory chain. The immediate electron acceptor for the enzyme in this species is believed to be plastoquinone. Couples the redox reaction to proton translocation, and thus conserves the redox energy in a proton gradient. The polypeptide is NAD(P)H-quinone oxidoreductase subunit 5, chloroplastic (ndhF) (Platanus occidentalis (Sycamore)).